Reading from the N-terminus, the 281-residue chain is CCAAT/enhancer-binding protein epsilon (281 aa).

The disordered stretch occupies residues 1–30 (MSHGTYYECEPRGGQQPLEFSGGRAGPGEL). A Glycyl lysine isopeptide (Lys-Gly) (interchain with G-Cter in SUMO2) cross-link involves residue Lys121. The residue at position 181 (Ser181) is a Phosphoserine. Positions 204-267 (SLEYRLRRER…DTLRNLFRQI (64 aa)) constitute a bZIP domain. Residues 208–228 (RLRRERNNIAVRKSRDKAKRR) are basic motif. The interval 230–237 (LETQQKVL) is leucine-zipper.

It belongs to the bZIP family. C/EBP subfamily. As to quaternary structure, binds DNA as a homodimer and as a heterodimer. Can form stable heterodimers with CEBPA, CEBPB and CEBPD. Interacts with GATA1 and SPI1. Interacts with SMARCD2. In terms of processing, phosphorylated. Strongest expression occurs in promyelocyte and late-myeloblast-like cell lines.

The protein resides in the nucleus. Its function is as follows. Transcriptional activator. C/EBP are DNA-binding proteins that recognize two different motifs: the CCAAT homology common to many promoters and the enhanced core homology common to many enhancers. Required for the promyelocyte-myelocyte transition in myeloid differentiation. The sequence is that of CCAAT/enhancer-binding protein epsilon (CEBPE) from Homo sapiens (Human).